The primary structure comprises 261 residues: Cytochrome c oxidase subunit 3 (261 aa).

Over 1–15 (MTHQTHAYHTVNPSP) the chain is Mitochondrial matrix. A helical membrane pass occupies residues 16 to 34 (WPLTGALSALLMTSGLIMW). Residues 35–40 (FHFNSP) lie on the Mitochondrial intermembrane side of the membrane. A helical membrane pass occupies residues 41–66 (LLLVLGLTTNFLTMYQWWRDIIREST). Residues 67–72 (FQGHHT) lie on the Mitochondrial matrix side of the membrane. A helical transmembrane segment spans residues 73–105 (TIVQKGLRYGMILFIVSEVFFFAGFFWAFYHSS). Over 106–128 (LAPTPELGGCWPPTGINPLNPLE) the chain is Mitochondrial intermembrane. Residues 129–152 (VPLLNTSVLLASGVSITWAHHSLM) form a helical membrane-spanning segment. At 153–155 (EGH) the chain is on the mitochondrial matrix side. Residues 156-183 (RKHMLQALFITIALGVYFTLLQASEYYE) form a helical membrane-spanning segment. Residues 184–190 (APFTISD) lie on the Mitochondrial intermembrane side of the membrane. The helical transmembrane segment at 191–223 (GIYGSTFFVATGFHGLHVIIGSSFLIVCFMRQL) threads the bilayer. Over 224–232 (KFHFTSSHH) the chain is Mitochondrial matrix. The helical transmembrane segment at 233-256 (FGFEAAAWYWHFVDVVWLFLYVSI) threads the bilayer. Over 257-261 (YWWGS) the chain is Mitochondrial intermembrane.

This sequence belongs to the cytochrome c oxidase subunit 3 family. As to quaternary structure, component of the cytochrome c oxidase (complex IV, CIV), a multisubunit enzyme composed of 14 subunits. The complex is composed of a catalytic core of 3 subunits MT-CO1, MT-CO2 and MT-CO3, encoded in the mitochondrial DNA, and 11 supernumerary subunits COX4I, COX5A, COX5B, COX6A, COX6B, COX6C, COX7A, COX7B, COX7C, COX8 and NDUFA4, which are encoded in the nuclear genome. The complex exists as a monomer or a dimer and forms supercomplexes (SCs) in the inner mitochondrial membrane with NADH-ubiquinone oxidoreductase (complex I, CI) and ubiquinol-cytochrome c oxidoreductase (cytochrome b-c1 complex, complex III, CIII), resulting in different assemblies (supercomplex SCI(1)III(2)IV(1) and megacomplex MCI(2)III(2)IV(2)).

The protein resides in the mitochondrion inner membrane. It carries out the reaction 4 Fe(II)-[cytochrome c] + O2 + 8 H(+)(in) = 4 Fe(III)-[cytochrome c] + 2 H2O + 4 H(+)(out). Its function is as follows. Component of the cytochrome c oxidase, the last enzyme in the mitochondrial electron transport chain which drives oxidative phosphorylation. The respiratory chain contains 3 multisubunit complexes succinate dehydrogenase (complex II, CII), ubiquinol-cytochrome c oxidoreductase (cytochrome b-c1 complex, complex III, CIII) and cytochrome c oxidase (complex IV, CIV), that cooperate to transfer electrons derived from NADH and succinate to molecular oxygen, creating an electrochemical gradient over the inner membrane that drives transmembrane transport and the ATP synthase. Cytochrome c oxidase is the component of the respiratory chain that catalyzes the reduction of oxygen to water. Electrons originating from reduced cytochrome c in the intermembrane space (IMS) are transferred via the dinuclear copper A center (CU(A)) of subunit 2 and heme A of subunit 1 to the active site in subunit 1, a binuclear center (BNC) formed by heme A3 and copper B (CU(B)). The BNC reduces molecular oxygen to 2 water molecules using 4 electrons from cytochrome c in the IMS and 4 protons from the mitochondrial matrix. In Dasypus novemcinctus (Nine-banded armadillo), this protein is Cytochrome c oxidase subunit 3 (MT-CO3).